An 805-amino-acid polypeptide reads, in one-letter code: Muscarinic acetylcholine receptor DM1 (805 aa).

The Extracellular portion of the chain corresponds to 1–100 (MEPVMSLALA…GFETKGPRYS (100 aa)). Residues 27 to 43 (TSTTTTTTTTTSTTTTT) are compositionally biased toward low complexity. The interval 27-47 (TSTTTTTTTTTSTTTTTASPA) is disordered. N-linked (GlcNAc...) asparagine glycosylation is found at asparagine 65, asparagine 84, and asparagine 87. The chain crosses the membrane as a helical span at residues 101–121 (LASMVVMGFVAAILSTVTVAG). Residues 122 to 141 (NVMVMISFKIDKQLQTISNY) lie on the Cytoplasmic side of the membrane. Residues 142–162 (FLFSLAIADFAIGAISMPLFA) traverse the membrane as a helical segment. At 163–177 (VTTILGYWPLGPIVC) the chain is on the extracellular side. A helical membrane pass occupies residues 178 to 198 (DTWLALDYLASNASVLNLLII). Residues 199–220 (SFDRYFSVTRPLTYRAKRTTNR) lie on the Cytoplasmic side of the membrane. A helical membrane pass occupies residues 221–241 (AAVMIGAAWGISLLLWPPWIY). The Extracellular segment spans residues 242–266 (SWPYIEGKRTVPKDECYIQFIETNQ). A helical transmembrane segment spans residues 267–287 (YITFGTALAAFYFPVTIMCFL). Residues 288–718 (YWRIWRETKK…KRQESKAAKT (431 aa)) are Cytoplasmic-facing. Disordered regions lie at residues 302–322 (LPNLQAGKKDSSKRSNSSDEN), 340–359 (GNDHDTWRRPRSESSPDAES), and 507–530 (GNGNGAINNNNNASHNGNGAVNGN). Composition is skewed to basic and acidic residues over residues 308-318 (GKKDSSKRSNS) and 341-353 (NDHDTWRRPRSES). A compositionally biased stretch (low complexity) spans 507–525 (GNGNGAINNNNNASHNGNG). The chain crosses the membrane as a helical span at residues 719-739 (LSAILLSFIITWTPYNILVLI). Over 740–752 (KPLTTCSDCIPTE) the chain is Extracellular. A helical membrane pass occupies residues 753 to 773 (LWDFFYALCYINSTINPMCYA). Residues 774–805 (LCNATFRRTYVRILTCKWHTRNREGMVRGVYN) are Cytoplasmic-facing.

Belongs to the G-protein coupled receptor 1 family. Muscarinic acetylcholine receptor subfamily. Intense staining in the glomeruli of the antennal lobes, the region of the nervous system containing terminals of antennal olfactory sensory neurons and mechanosensory neurons. Also a discrete group of neurosecretory cells in the pars intercerebralis of the brain.

Its subcellular location is the cell membrane. The protein localises to the postsynaptic cell membrane. The muscarinic acetylcholine receptor mediates various cellular responses, including inhibition of adenylate cyclase, breakdown of phosphoinositides and modulation of potassium channels through the action of G proteins. Primary transducing effect is Pi turnover. May have a role in the processing of olfactory and mechanosensory signals; regulation of neurosecretion. The chain is Muscarinic acetylcholine receptor DM1 (mAChR-A) from Drosophila melanogaster (Fruit fly).